A 175-amino-acid chain; its full sequence is Methylated-DNA--protein-cysteine methyltransferase (175 aa).

DNA contacts are provided by tyrosine 115 and arginine 127. Cysteine 144 serves as the catalytic Nucleophile; methyl group acceptor.

The protein belongs to the MGMT family.

It localises to the nucleus. It carries out the reaction a 6-O-methyl-2'-deoxyguanosine in DNA + L-cysteinyl-[protein] = S-methyl-L-cysteinyl-[protein] + a 2'-deoxyguanosine in DNA. The enzyme catalyses a 4-O-methyl-thymidine in DNA + L-cysteinyl-[protein] = a thymidine in DNA + S-methyl-L-cysteinyl-[protein]. In terms of biological role, involved in the cellular defense against the biological effects of O6-methylguanine (O6-MeG) and O4-methylthymine (O4-MeT) in DNA. Repairs the methylated nucleobase in DNA by stoichiometrically transferring the methyl group to a cysteine residue in the enzyme. This is a suicide reaction: the enzyme is irreversibly inactivated. This chain is Methylated-DNA--protein-cysteine methyltransferase (MGT1), found in Candida albicans (strain SC5314 / ATCC MYA-2876) (Yeast).